Here is a 564-residue protein sequence, read N- to C-terminus: ATP-dependent RNA helicase DBP3 (564 aa).

A disordered region spans residues Thr31–Ser125. Over residues Ala58–Asp73 the composition is skewed to basic and acidic residues. Over residues Lys74–Lys96 the composition is skewed to basic residues. Positions Ser112–Ser125 are enriched in low complexity. A Q motif motif is present at residues Leu155–Ser181. The Helicase ATP-binding domain maps to Trp184–Val356. Ala197 to Thr204 provides a ligand contact to ATP. The DEAD box motif lies at Asp303–Asp306. The 150-residue stretch at Lys385–Gly534 folds into the Helicase C-terminal domain.

The protein belongs to the DEAD box helicase family. DDX5/DBP2 subfamily.

The protein localises to the nucleus. The protein resides in the nucleolus. The catalysed reaction is ATP + H2O = ADP + phosphate + H(+). In terms of biological role, ATP-dependent RNA helicase required for 60S ribosomal subunit synthesis. Involved in efficient pre-rRNA processing, predominantly at site A3, which is necessary for the normal formation of 25S and 5.8S rRNAs. The chain is ATP-dependent RNA helicase DBP3 (DBP3) from Candida albicans (strain SC5314 / ATCC MYA-2876) (Yeast).